Here is an 89-residue protein sequence, read N- to C-terminus: Small ribosomal subunit protein uS15 (89 aa).

Belongs to the universal ribosomal protein uS15 family. Part of the 30S ribosomal subunit. Forms a bridge to the 50S subunit in the 70S ribosome, contacting the 23S rRNA.

Functionally, one of the primary rRNA binding proteins, it binds directly to 16S rRNA where it helps nucleate assembly of the platform of the 30S subunit by binding and bridging several RNA helices of the 16S rRNA. In terms of biological role, forms an intersubunit bridge (bridge B4) with the 23S rRNA of the 50S subunit in the ribosome. This chain is Small ribosomal subunit protein uS15, found in Sinorhizobium medicae (strain WSM419) (Ensifer medicae).